A 414-amino-acid polypeptide reads, in one-letter code: Diaminopimelate decarboxylase (414 aa).

Lysine 52 bears the N6-(pyridoxal phosphate)lysine mark. Pyridoxal 5'-phosphate contacts are provided by residues glycine 231 and 265 to 268 (EPGR). Residues arginine 268, arginine 304, and tyrosine 308 each contribute to the substrate site. Residue cysteine 334 is the Proton donor of the active site. Residues glutamate 335 and tyrosine 362 each coordinate substrate. Tyrosine 362 is a pyridoxal 5'-phosphate binding site.

Belongs to the Orn/Lys/Arg decarboxylase class-II family. LysA subfamily. Homodimer. Pyridoxal 5'-phosphate serves as cofactor.

The enzyme catalyses meso-2,6-diaminopimelate + H(+) = L-lysine + CO2. It functions in the pathway amino-acid biosynthesis; L-lysine biosynthesis via DAP pathway; L-lysine from DL-2,6-diaminopimelate: step 1/1. Its function is as follows. Specifically catalyzes the decarboxylation of meso-diaminopimelate (meso-DAP) to L-lysine. This Neisseria meningitidis serogroup B (strain ATCC BAA-335 / MC58) protein is Diaminopimelate decarboxylase.